The following is a 479-amino-acid chain: UDP-N-acetylmuramoyl-L-alanyl-D-glutamate--2,6-diaminopimelate ligase (479 aa).

Residue Ser-21 coordinates UDP-N-acetyl-alpha-D-muramoyl-L-alanyl-D-glutamate. Residue 98 to 104 (GTNGKSS) coordinates ATP. UDP-N-acetyl-alpha-D-muramoyl-L-alanyl-D-glutamate is bound by residues 144–145 (TT), Ser-171, Gln-177, and Arg-179. Residue Lys-211 is modified to N6-carboxylysine. Meso-2,6-diaminopimelate is bound by residues Arg-372, 396-399 (DNPR), Gly-446, and Glu-450. Positions 396 to 399 (DNPR) match the Meso-diaminopimelate recognition motif motif.

This sequence belongs to the MurCDEF family. MurE subfamily. Requires Mg(2+) as cofactor. In terms of processing, carboxylation is probably crucial for Mg(2+) binding and, consequently, for the gamma-phosphate positioning of ATP.

Its subcellular location is the cytoplasm. The catalysed reaction is UDP-N-acetyl-alpha-D-muramoyl-L-alanyl-D-glutamate + meso-2,6-diaminopimelate + ATP = UDP-N-acetyl-alpha-D-muramoyl-L-alanyl-gamma-D-glutamyl-meso-2,6-diaminopimelate + ADP + phosphate + H(+). It participates in cell wall biogenesis; peptidoglycan biosynthesis. In terms of biological role, catalyzes the addition of meso-diaminopimelic acid to the nucleotide precursor UDP-N-acetylmuramoyl-L-alanyl-D-glutamate (UMAG) in the biosynthesis of bacterial cell-wall peptidoglycan. In Rickettsia montanensis, this protein is UDP-N-acetylmuramoyl-L-alanyl-D-glutamate--2,6-diaminopimelate ligase.